Reading from the N-terminus, the 351-residue chain is Nuclear inhibitor of protein phosphatase 1 (351 aa).

The interval 1-142 (MAAAANSGSS…LPSAVKGDEK (142 aa)) is interaction with CDC5L, SF3B1 and MELK. An FHA domain is found at 49 to 101 (YLFGRNPDLCDFTIDHQSCSRVHAALVYHKHLKRVFLIDLNSTHGTFLGHIRL). The interaction with EED stretch occupies residues 143-224 (MGGEDDELKG…VDPSVGRFRN (82 aa)). T161 is modified (phosphothreonine). Phosphoserine occurs at positions 178 and 199. 2 short sequence motifs (nuclear localization signal) span residues 185 to 209 (GNLDIQRPKRKRKNSRVTFSEDDEI) and 210 to 240 (INPEDVDPSVGRFRNMVQTAVVPVKKKRVEG). Residues 191–200 (RPKRKRKNSR) are involved in PP-1 inhibition. The segment at 200–203 (RVTF) is involved in PP-1 binding. Residue S204 is modified to Phosphoserine. S249 is modified (phosphoserine). Y264 carries the phosphotyrosine; by LYN; in vitro modification. The interval 310–329 (AVNMNPAPNPAVYNPEAVNE) is interaction with EED. The segment at 316–351 (APNPAVYNPEAVNEPKKKKYAKEAWPGKKPTPSLLI) is disordered. The RNA-binding stretch occupies residues 330 to 351 (PKKKKYAKEAWPGKKPTPSLLI). Residues 331–337 (KKKKYAK) are involved in PP-1 inhibition. Y335 is modified (phosphotyrosine).

In terms of assembly, interacts with phosphorylated CDC5L, SF3B1 and MELK. Interacts with EED, in a nucleic acid-stimulated manner. Part of a complex consisting of PPP1R8, EED, HDAC2 and PP-1. Part of the spliceosome. Interacts with PPP1CA, PPP1CB and PPP1CC. Mg(2+) is required as a cofactor. Post-translationally, may be inactivated by phosphorylation on Ser-199 or Ser-204. Phosphorylated by Lyn in vitro on Tyr-264, and also on Tyr-335 in the presence of RNA. As to expression, ubiquitously expressed, with highest levels in heart and skeletal muscle, followed by brain, placenta, lung, liver and pancreas. Less abundant in kidney. The concentration and ratio between isoforms is cell-type dependent. Isoform Alpha (&gt;90%) and isoform Beta were found in brain, heart and kidney. Isoform Gamma is mainly found in B-cells and T-lymphocytes, and has been found in 293 embryonic kidney cells.

It localises to the nucleus. The protein localises to the nucleus speckle. Its subcellular location is the cytoplasm. Inhibitor subunit of the major nuclear protein phosphatase-1 (PP-1). It has RNA-binding activity but does not cleave RNA and may target PP-1 to RNA-associated substrates. May also be involved in pre-mRNA splicing. Binds DNA and might act as a transcriptional repressor. Seems to be required for cell proliferation. In terms of biological role, isoform Gamma is a site-specific single-strand endoribonuclease that cleaves single strand RNA 3' to purines and pyrimidines in A+U-rich regions. It generates 5'-phosphate termini at the site of cleavage. This isoform does not inhibit PP-1. May be implicated in mRNA splicing. This chain is Nuclear inhibitor of protein phosphatase 1 (PPP1R8), found in Homo sapiens (Human).